The chain runs to 370 residues: Ubiquitin carboxyl-terminal hydrolase 12 (370 aa).

Residues 1-4 carry the Required for plasma membrane localization of USP12/WDR20 motif; the sequence is MEIL. The USP domain maps to 39 to 369; it reads FGLVNFGNTC…SGYILFYQSR (331 aa). C48 functions as the Nucleophile in the catalytic mechanism. A compositionally biased stretch (basic and acidic residues) spans 146-157; it reads QEKQNGRLRNGD. The segment at 146-168 is disordered; sequence QEKQNGRLRNGDVDNEDNNSTPD. Zn(2+) is bound by residues C186, C189, C233, and C236. Catalysis depends on H317, which acts as the Proton acceptor.

This sequence belongs to the peptidase C19 family. USP12/USP46 subfamily. As to quaternary structure, interacts with WDR48. Interacts with WDR20; this interaction promotes translocation of the USP12 complex to the plasma membrane. Component of the USP12/WDR20/WDR48 deubiquitinating complex. Component of the USP12/DMWD/WDR48 deubiquitinating complex. Interacts with PHLPP1. Interacts with RBPJ. Interacts with CBP; this interaction blocks the acetyltransferase activity of CREBBP.

The protein resides in the nucleus. It is found in the cytoplasm. It localises to the cell membrane. The enzyme catalyses Thiol-dependent hydrolysis of ester, thioester, amide, peptide and isopeptide bonds formed by the C-terminal Gly of ubiquitin (a 76-residue protein attached to proteins as an intracellular targeting signal).. Activated by interaction with WDR20; WDR48 and DMWD through different allosteric mechanisms. Deubiquitinating enzyme that plays various roles in the regulation of the immune response and inflammation. During TCR engagement and activation, translocates into the cytoplasm and deubiquitinates its substrates LAT and TRAT1 and prevents their lysosome-dependent degradation to stabilize the TCR signaling complex at the plasma membrane. Plays an essential role in the selective LPS-induced macrophage response through the activation of NF-kappa-B pathway. In addition, promotes that antiviral immune response through targeting DNA sensor IFI16 to inhibit its proteasome-dependent degradation. Participates in the interferon signaling pathway and antiviral response independently of its deubiquitinase activity by maintaining nuclear phosphorylated STAT1 levels via inhibition of its CREBBP-mediated acetylation and subsequent dephosphorylation. Plays an intrinsic role in promoting the differentiation, activation and proliferation of CD4(+) T-cell by activating the NF-kappa-B signaling pathway through deubiquitinating and stabilizing B-cell lymphoma/leukemia 10/BCL10. In myeloid-derived suppressor cells promotes the activation of the NF-kappa-B via deubiquitination and stabilization of RELA. Regulates the 'Lys-63'-linked polyubiquitin chains of BAX and thereby modulates the mitochondrial apoptotic process. Negative regulator of NOTCH signaling that specifically deubiquitinates non-activated NOTCH receptors to target them for lysosomal degradation; deubiquitination of NOTCH stimulates its transport form late endosomes to lysosomes. Protects neurons against HTT/huntingtin-induced polyglutamine expansion-dependent neurodegeneration through regulation of autophagic flux. This function is independent of deubiquitinase activity or of other components of the USP12-WDR20-WDR48 deubiquitinating complex. In complex with WDR48, acts as a potential tumor suppressor by positively regulating PHLPP1 stability. This chain is Ubiquitin carboxyl-terminal hydrolase 12 (Usp12), found in Mus musculus (Mouse).